Reading from the N-terminus, the 266-residue chain is Chymotrypsin-like elastase family member 1 (266 aa).

Residues Met1–Ser16 form the signal peptide. Positions Thr17–Arg26 are cleaved as a propeptide — activation peptide. Positions Val27 to Ala264 constitute a Peptidase S1 domain. Cys56 and Cys72 form a disulfide bridge. The active-site Charge relay system is His71. Ca(2+) contacts are provided by Glu85, Asn87, Gln90, and Glu95. An N-linked (GlcNAc...) asparagine glycan is attached at Asn87. Asp119 (charge relay system) is an active-site residue. Cystine bridges form between Cys153–Cys220, Cys184–Cys200, and Cys210–Cys240. Ser214 acts as the Charge relay system in catalysis.

This sequence belongs to the peptidase S1 family. Elastase subfamily. It depends on Ca(2+) as a cofactor.

The protein resides in the secreted. The enzyme catalyses Hydrolysis of proteins, including elastin. Preferential cleavage: Ala-|-Xaa.. Serine proteases that hydrolyze many proteins in addition to elastin. The protein is Chymotrypsin-like elastase family member 1 (Cela1) of Mus musculus (Mouse).